Here is a 255-residue protein sequence, read N- to C-terminus: Flap endonuclease Xni (255 aa).

A Mg(2+)-binding site is contributed by Asp105. The region spanning 162 to 253 is the 5'-3' exonuclease domain; it reads EHSQFIDYLA…NLSQFRLPNP (92 aa). The K(+) site is built by Leu172, Ala173, Pro181, Val183, and Ile186. Residues 185-190 form an interaction with DNA region; the sequence is GIGPKS.

This sequence belongs to the Xni family. Requires Mg(2+) as cofactor. The cofactor is K(+).

Has flap endonuclease activity. During DNA replication, flap endonucleases cleave the 5'-overhanging flap structure that is generated by displacement synthesis when DNA polymerase encounters the 5'-end of a downstream Okazaki fragment. The sequence is that of Flap endonuclease Xni from Shewanella sediminis (strain HAW-EB3).